Consider the following 475-residue polypeptide: Aspartyl/glutamyl-tRNA(Asn/Gln) amidotransferase subunit B (475 aa).

The protein belongs to the GatB/GatE family. GatB subfamily. As to quaternary structure, heterotrimer of A, B and C subunits.

It catalyses the reaction L-glutamyl-tRNA(Gln) + L-glutamine + ATP + H2O = L-glutaminyl-tRNA(Gln) + L-glutamate + ADP + phosphate + H(+). The enzyme catalyses L-aspartyl-tRNA(Asn) + L-glutamine + ATP + H2O = L-asparaginyl-tRNA(Asn) + L-glutamate + ADP + phosphate + 2 H(+). Functionally, allows the formation of correctly charged Asn-tRNA(Asn) or Gln-tRNA(Gln) through the transamidation of misacylated Asp-tRNA(Asn) or Glu-tRNA(Gln) in organisms which lack either or both of asparaginyl-tRNA or glutaminyl-tRNA synthetases. The reaction takes place in the presence of glutamine and ATP through an activated phospho-Asp-tRNA(Asn) or phospho-Glu-tRNA(Gln). The protein is Aspartyl/glutamyl-tRNA(Asn/Gln) amidotransferase subunit B of Thermoanaerobacter sp. (strain X514).